We begin with the raw amino-acid sequence, 259 residues long: Ribosome maturation factor RimP (259 aa).

Residues 186–195 (RGKQAERELK) are compositionally biased toward basic and acidic residues. A disordered region spans residues 186–259 (RGKQAERELK…RGDTDLSEGD (74 aa)). Residues 239 to 248 (KQHRLAAGRS) show a composition bias toward basic residues.

The protein belongs to the RimP family.

It localises to the cytoplasm. Functionally, required for maturation of 30S ribosomal subunits. In Rhodopseudomonas palustris (strain HaA2), this protein is Ribosome maturation factor RimP.